Here is a 459-residue protein sequence, read N- to C-terminus: Argininosuccinate lyase (459 aa).

The protein belongs to the lyase 1 family. Argininosuccinate lyase subfamily.

It is found in the cytoplasm. It catalyses the reaction 2-(N(omega)-L-arginino)succinate = fumarate + L-arginine. The protein operates within amino-acid biosynthesis; L-arginine biosynthesis; L-arginine from L-ornithine and carbamoyl phosphate: step 3/3. This Buchnera aphidicola subsp. Schizaphis graminum (strain Sg) protein is Argininosuccinate lyase.